A 420-amino-acid polypeptide reads, in one-letter code: MAPK/MAK/MRK overlapping kinase (420 aa).

In terms of domain architecture, Protein kinase spans 4-285; sequence YKAIGKIGEG…AHQALQHPYF (282 aa). Residues 10-18 and K33 contribute to the ATP site; that span reads IGEGTFSEV. D128 (proton acceptor) is an active-site residue. A compositionally biased stretch (polar residues) spans 311–322; it reads PESSSHNWSFSQ. Residues 311 to 344 are disordered; the sequence is PESSSHNWSFSQEGRKQKQSLRHEEGHARRQGPT. Residues 323–338 are compositionally biased toward basic and acidic residues; sequence EGRKQKQSLRHEEGHA.

Belongs to the protein kinase superfamily. CMGC Ser/Thr protein kinase family. CDC2/CDKX subfamily. It depends on Mg(2+) as a cofactor. Autophosphorylated. Highly expressed in testis, and less in kidney, brain and lung.

It is found in the cytoplasm. It localises to the cell projection. The protein resides in the cilium. Its subcellular location is the nucleus. The enzyme catalyses L-seryl-[protein] + ATP = O-phospho-L-seryl-[protein] + ADP + H(+). It carries out the reaction L-threonyl-[protein] + ATP = O-phospho-L-threonyl-[protein] + ADP + H(+). Phosphorylation appears to increase the enzymatic activity. Able to phosphorylate several exogenous substrates and to undergo autophosphorylation. Negatively regulates cilium length in a cAMP and mTORC1 signaling-dependent manner. This chain is MAPK/MAK/MRK overlapping kinase (Mok), found in Mus musculus (Mouse).